Reading from the N-terminus, the 251-residue chain is tRNA pseudouridine synthase A (251 aa).

Asp-53 serves as the catalytic Nucleophile. Tyr-110 lines the substrate pocket.

This sequence belongs to the tRNA pseudouridine synthase TruA family. As to quaternary structure, homodimer.

It carries out the reaction uridine(38/39/40) in tRNA = pseudouridine(38/39/40) in tRNA. In terms of biological role, formation of pseudouridine at positions 38, 39 and 40 in the anticodon stem and loop of transfer RNAs. This Mesoplasma florum (strain ATCC 33453 / NBRC 100688 / NCTC 11704 / L1) (Acholeplasma florum) protein is tRNA pseudouridine synthase A.